We begin with the raw amino-acid sequence, 227 residues long: Cytochrome c oxidase subunit 2 (227 aa).

The Mitochondrial intermembrane segment spans residues 1–14 (MAYPFQLGLQDATS). A helical membrane pass occupies residues 15-45 (PIMEELLHFHDHTLMIVFLISSLVLYIISLM). Over 46 to 59 (LTTKLTHTSTMDAQ) the chain is Mitochondrial matrix. A helical membrane pass occupies residues 60-87 (EVETVWTILPAIILILIALPSLRILYMM). Topologically, residues 88–227 (DEINNPSLTV…YFEAWSALMV (140 aa)) are mitochondrial intermembrane. 6 residues coordinate Cu cation: His161, Cys196, Glu198, Cys200, His204, and Met207. Position 198 (Glu198) interacts with Mg(2+). Position 218 is a phosphotyrosine (Tyr218).

It belongs to the cytochrome c oxidase subunit 2 family. In terms of assembly, component of the cytochrome c oxidase (complex IV, CIV), a multisubunit enzyme composed of 14 subunits. The complex is composed of a catalytic core of 3 subunits MT-CO1, MT-CO2 and MT-CO3, encoded in the mitochondrial DNA, and 11 supernumerary subunits COX4I, COX5A, COX5B, COX6A, COX6B, COX6C, COX7A, COX7B, COX7C, COX8 and NDUFA4, which are encoded in the nuclear genome. The complex exists as a monomer or a dimer and forms supercomplexes (SCs) in the inner mitochondrial membrane with NADH-ubiquinone oxidoreductase (complex I, CI) and ubiquinol-cytochrome c oxidoreductase (cytochrome b-c1 complex, complex III, CIII), resulting in different assemblies (supercomplex SCI(1)III(2)IV(1) and megacomplex MCI(2)III(2)IV(2)). Found in a complex with TMEM177, COA6, COX18, COX20, SCO1 and SCO2. Interacts with TMEM177 in a COX20-dependent manner. Interacts with COX20. Interacts with COX16. Cu cation serves as cofactor.

Its subcellular location is the mitochondrion inner membrane. It carries out the reaction 4 Fe(II)-[cytochrome c] + O2 + 8 H(+)(in) = 4 Fe(III)-[cytochrome c] + 2 H2O + 4 H(+)(out). In terms of biological role, component of the cytochrome c oxidase, the last enzyme in the mitochondrial electron transport chain which drives oxidative phosphorylation. The respiratory chain contains 3 multisubunit complexes succinate dehydrogenase (complex II, CII), ubiquinol-cytochrome c oxidoreductase (cytochrome b-c1 complex, complex III, CIII) and cytochrome c oxidase (complex IV, CIV), that cooperate to transfer electrons derived from NADH and succinate to molecular oxygen, creating an electrochemical gradient over the inner membrane that drives transmembrane transport and the ATP synthase. Cytochrome c oxidase is the component of the respiratory chain that catalyzes the reduction of oxygen to water. Electrons originating from reduced cytochrome c in the intermembrane space (IMS) are transferred via the dinuclear copper A center (CU(A)) of subunit 2 and heme A of subunit 1 to the active site in subunit 1, a binuclear center (BNC) formed by heme A3 and copper B (CU(B)). The BNC reduces molecular oxygen to 2 water molecules using 4 electrons from cytochrome c in the IMS and 4 protons from the mitochondrial matrix. The chain is Cytochrome c oxidase subunit 2 (MT-CO2) from Cuon alpinus (Dhole).